Consider the following 400-residue polypeptide: Putative C-type lectin domain family 20 member A (400 aa).

An N-terminal signal peptide occupies residues 1–20 (MLPRALLLSFCAAALQLVSS). C-type lectin domains follow at residues 26 to 131 (LVKE…FLCY) and 159 to 275 (ISGQ…FFCF). 4 cysteine pairs are disulfide-bonded: Cys40-Cys130, Cys105-Cys122, Cys180-Cys274, and Cys248-Cys266. The tract at residues 287–346 (ELPPLFHTSPTEMTEETTPRPGRAVASVGSGTDRRDTAAATEAQHLSSESKEKTSAQKSG) is disordered.

This Homo sapiens (Human) protein is Putative C-type lectin domain family 20 member A.